The following is a 43-amino-acid chain: Protein PsbN (43 aa).

A helical transmembrane segment spans residues 5–27 (TVFSIFISCLLLSLTGYSLYTAF).

Belongs to the PsbN family.

Its subcellular location is the plastid. It is found in the chloroplast thylakoid membrane. May play a role in photosystem I and II biogenesis. The sequence is that of Protein PsbN from Chlorokybus atmophyticus (Soil alga).